We begin with the raw amino-acid sequence, 162 residues long: Large ribosomal subunit protein bL17 (162 aa).

The segment covering 125–140 has biased composition (basic and acidic residues); sequence AAKEAPAKEVAEEKAA. The disordered stretch occupies residues 125–162; sequence AAKEAPAKEVAEEKAAKPAKKAAPKKAEKEEAEDAAEA.

The protein belongs to the bacterial ribosomal protein bL17 family. Part of the 50S ribosomal subunit. Contacts protein L32.

The polypeptide is Large ribosomal subunit protein bL17 (Oleidesulfovibrio alaskensis (strain ATCC BAA-1058 / DSM 17464 / G20) (Desulfovibrio alaskensis)).